Here is an 81-residue protein sequence, read N- to C-terminus: Acyl carrier protein (81 aa).

In terms of domain architecture, Carrier spans 1-79; sequence MDREEILQKI…EAVDYVVEHQ (79 aa). Ser-39 carries the O-(pantetheine 4'-phosphoryl)serine modification.

It belongs to the acyl carrier protein (ACP) family. 4'-phosphopantetheine is transferred from CoA to a specific serine of apo-ACP by AcpS. This modification is essential for activity because fatty acids are bound in thioester linkage to the sulfhydryl of the prosthetic group.

It localises to the cytoplasm. It functions in the pathway lipid metabolism; fatty acid biosynthesis. Functionally, carrier of the growing fatty acid chain in fatty acid biosynthesis. The chain is Acyl carrier protein from Rubrobacter xylanophilus (strain DSM 9941 / JCM 11954 / NBRC 16129 / PRD-1).